Here is an 816-residue protein sequence, read N- to C-terminus: Leucine--tRNA ligase (816 aa).

Positions 40–51 (SYPSGSQLHAGH) match the 'HIGH' region motif. Positions 576–580 (KMSKS) match the 'KMSKS' region motif. Lys579 is an ATP binding site.

This sequence belongs to the class-I aminoacyl-tRNA synthetase family.

The protein localises to the cytoplasm. It carries out the reaction tRNA(Leu) + L-leucine + ATP = L-leucyl-tRNA(Leu) + AMP + diphosphate. This is Leucine--tRNA ligase from Clostridium perfringens (strain SM101 / Type A).